Reading from the N-terminus, the 761-residue chain is Phosphoribosylformylglycinamidine synthase subunit PurL (761 aa).

Residues 1 to 16 (MTGNPAAPAATSVSPP) show a composition bias toward low complexity. Positions 1 to 21 (MTGNPAAPAATSVSPPAEQPY) are disordered. The active site involves His-57. Positions 60 and 101 each coordinate ATP. A Mg(2+)-binding site is contributed by Glu-103. Substrate contacts are provided by residues 104–107 (SHNH) and Arg-126. His-105 (proton acceptor) is an active-site residue. Residue Asp-127 coordinates Mg(2+). A substrate-binding site is contributed by Gln-252. Mg(2+) is bound at residue Asp-280. 329–331 (ESQ) is a substrate binding site. Positions 519 and 556 each coordinate ATP. Mg(2+) is bound at residue Asn-557. Ser-559 serves as a coordination point for substrate.

Belongs to the FGAMS family. Monomer. Part of the FGAM synthase complex composed of 1 PurL, 1 PurQ and 2 PurS subunits.

It localises to the cytoplasm. The enzyme catalyses N(2)-formyl-N(1)-(5-phospho-beta-D-ribosyl)glycinamide + L-glutamine + ATP + H2O = 2-formamido-N(1)-(5-O-phospho-beta-D-ribosyl)acetamidine + L-glutamate + ADP + phosphate + H(+). It participates in purine metabolism; IMP biosynthesis via de novo pathway; 5-amino-1-(5-phospho-D-ribosyl)imidazole from N(2)-formyl-N(1)-(5-phospho-D-ribosyl)glycinamide: step 1/2. Part of the phosphoribosylformylglycinamidine synthase complex involved in the purines biosynthetic pathway. Catalyzes the ATP-dependent conversion of formylglycinamide ribonucleotide (FGAR) and glutamine to yield formylglycinamidine ribonucleotide (FGAM) and glutamate. The FGAM synthase complex is composed of three subunits. PurQ produces an ammonia molecule by converting glutamine to glutamate. PurL transfers the ammonia molecule to FGAR to form FGAM in an ATP-dependent manner. PurS interacts with PurQ and PurL and is thought to assist in the transfer of the ammonia molecule from PurQ to PurL. This Frankia casuarinae (strain DSM 45818 / CECT 9043 / HFP020203 / CcI3) protein is Phosphoribosylformylglycinamidine synthase subunit PurL.